Here is a 355-residue protein sequence, read N- to C-terminus: Protein RecA (355 aa).

65–72 (GPESSGKT) lines the ATP pocket.

The protein belongs to the RecA family.

It is found in the cytoplasm. Functionally, can catalyze the hydrolysis of ATP in the presence of single-stranded DNA, the ATP-dependent uptake of single-stranded DNA by duplex DNA, and the ATP-dependent hybridization of homologous single-stranded DNAs. It interacts with LexA causing its activation and leading to its autocatalytic cleavage. In Pseudomonas putida (strain GB-1), this protein is Protein RecA.